A 174-amino-acid chain; its full sequence is uncharacterized protein (174 aa).

Composition is skewed to basic and acidic residues over residues 1 to 31 (MDKH…GKEG) and 52 to 67 (EPPR…ERRS). The segment at 1-69 (MDKHGVKTPL…GEGRERRSVS (69 aa)) is disordered.

This is an uncharacterized protein from Homo sapiens (Human).